Reading from the N-terminus, the 494-residue chain is Probable cytosol aminopeptidase (494 aa).

Mn(2+) is bound by residues Lys-260 and Asp-265. Residue Lys-272 is part of the active site. Asp-283, Asp-342, and Glu-344 together coordinate Mn(2+). The active site involves Arg-346.

Belongs to the peptidase M17 family. Mn(2+) serves as cofactor.

The protein resides in the cytoplasm. The catalysed reaction is Release of an N-terminal amino acid, Xaa-|-Yaa-, in which Xaa is preferably Leu, but may be other amino acids including Pro although not Arg or Lys, and Yaa may be Pro. Amino acid amides and methyl esters are also readily hydrolyzed, but rates on arylamides are exceedingly low.. It carries out the reaction Release of an N-terminal amino acid, preferentially leucine, but not glutamic or aspartic acids.. Presumably involved in the processing and regular turnover of intracellular proteins. Catalyzes the removal of unsubstituted N-terminal amino acids from various peptides. The chain is Probable cytosol aminopeptidase from Bacillus cereus (strain AH187).